A 205-amino-acid chain; its full sequence is Adenylyl-sulfate kinase (205 aa).

31 to 38 (GLSGAGKS) contributes to the ATP binding site. The active-site Phosphoserine intermediate is S105.

The protein belongs to the APS kinase family.

The catalysed reaction is adenosine 5'-phosphosulfate + ATP = 3'-phosphoadenylyl sulfate + ADP + H(+). Its pathway is sulfur metabolism; hydrogen sulfide biosynthesis; sulfite from sulfate: step 2/3. In terms of biological role, catalyzes the synthesis of activated sulfate. The chain is Adenylyl-sulfate kinase from Shewanella sp. (strain MR-4).